A 165-amino-acid polypeptide reads, in one-letter code: uncharacterized protein (165 aa).

The chain crosses the membrane as a helical span at residues 7-29 (YPLIFTAFLLIAFCLIFFSYHLI).

The protein localises to the membrane. This is an uncharacterized protein from Bacillus subtilis (strain 168).